Reading from the N-terminus, the 72-residue chain is UPF0352 protein Shal_2512 (72 aa).

The protein belongs to the UPF0352 family.

The sequence is that of UPF0352 protein Shal_2512 from Shewanella halifaxensis (strain HAW-EB4).